Consider the following 250-residue polypeptide: Triosephosphate isomerase (250 aa).

8–10 is a binding site for substrate; sequence NWK. The active-site Electrophile is the His93. Catalysis depends on Glu165, which acts as the Proton acceptor. Substrate is bound by residues Gly171 and Ser211.

It belongs to the triosephosphate isomerase family. In terms of assembly, homodimer.

It localises to the cytoplasm. The catalysed reaction is D-glyceraldehyde 3-phosphate = dihydroxyacetone phosphate. Its pathway is carbohydrate biosynthesis; gluconeogenesis. It functions in the pathway carbohydrate degradation; glycolysis; D-glyceraldehyde 3-phosphate from glycerone phosphate: step 1/1. In terms of biological role, involved in the gluconeogenesis. Catalyzes stereospecifically the conversion of dihydroxyacetone phosphate (DHAP) to D-glyceraldehyde-3-phosphate (G3P). This Malacoplasma penetrans (strain HF-2) (Mycoplasma penetrans) protein is Triosephosphate isomerase.